A 498-amino-acid polypeptide reads, in one-letter code: Phenylalanine--tRNA ligase alpha subunit (498 aa).

Residues Thr-328, 372–374, and Tyr-412 each bind L-phenylalanine; that span reads QVE. Glu-414 contributes to the Mg(2+) binding site. Phe-438 provides a ligand contact to L-phenylalanine.

This sequence belongs to the class-II aminoacyl-tRNA synthetase family. Phe-tRNA synthetase alpha subunit type 2 subfamily. In terms of assembly, tetramer of two alpha and two beta subunits. Mg(2+) serves as cofactor.

The protein resides in the cytoplasm. The catalysed reaction is tRNA(Phe) + L-phenylalanine + ATP = L-phenylalanyl-tRNA(Phe) + AMP + diphosphate + H(+). The polypeptide is Phenylalanine--tRNA ligase alpha subunit (Drosophila melanogaster (Fruit fly)).